The primary structure comprises 319 residues: Ribosomal RNA large subunit methyltransferase F (319 aa).

The disordered stretch occupies residues 1–25 (MAPFFSAMTSKKQSQGLPKGPHPDN). Polar residues predominate over residues 7-16 (AMTSKKQSQG).

Belongs to the methyltransferase superfamily. METTL16/RlmF family.

Its subcellular location is the cytoplasm. The enzyme catalyses adenosine(1618) in 23S rRNA + S-adenosyl-L-methionine = N(6)-methyladenosine(1618) in 23S rRNA + S-adenosyl-L-homocysteine + H(+). In terms of biological role, specifically methylates the adenine in position 1618 of 23S rRNA. The sequence is that of Ribosomal RNA large subunit methyltransferase F from Shewanella amazonensis (strain ATCC BAA-1098 / SB2B).